The sequence spans 253 residues: CENP-A recruiting complex protein mis20 (253 aa).

Residues 113-136 (TGPTTSKNKHPSHSNTIRSPPYKV) form a disordered region.

In terms of assembly, component of the CENP-A recruiting complex composed of at least mis16, mis19, mis19 and mis20.

Its subcellular location is the cytoplasm. The protein resides in the cytoskeleton. It is found in the microtubule organizing center. The protein localises to the spindle pole body. It localises to the chromosome. Its subcellular location is the centromere. Component of the CENP-A recruiting complex that ensures the integrity of mitotic spindles through maintenance of kinetochore factors mis6/CENP-I and cnp1/CENP-A. Seems dispensable for proper chromosome segregation. The protein is CENP-A recruiting complex protein mis20 of Schizosaccharomyces pombe (strain 972 / ATCC 24843) (Fission yeast).